The sequence spans 412 residues: Putative competence-damage inducible protein (412 aa).

Belongs to the CinA family.

In Bacillus anthracis, this protein is Putative competence-damage inducible protein.